We begin with the raw amino-acid sequence, 899 residues long: Bifunctional uridylyltransferase/uridylyl-removing enzyme (899 aa).

A uridylyltransferase region spans residues 1-347 (MFISDPTDSL…PESERPEKSV (347 aa)). Positions 348 to 718 (LNARFNRVGD…EHRELALDAV (371 aa)) are uridylyl-removing. An HD domain is found at 465-581 (VDAHILLLIR…TKFANLVGNV (117 aa)). ACT domains follow at residues 719–804 (QIFI…RLPR) and 827–899 (VMSL…TPSC).

This sequence belongs to the GlnD family. Mg(2+) serves as cofactor.

The enzyme catalyses [protein-PII]-L-tyrosine + UTP = [protein-PII]-uridylyl-L-tyrosine + diphosphate. It catalyses the reaction [protein-PII]-uridylyl-L-tyrosine + H2O = [protein-PII]-L-tyrosine + UMP + H(+). Uridylyltransferase (UTase) activity is inhibited by glutamine, while glutamine activates uridylyl-removing (UR) activity. In terms of biological role, modifies, by uridylylation and deuridylylation, the PII regulatory proteins (GlnB and homologs), in response to the nitrogen status of the cell that GlnD senses through the glutamine level. Under low glutamine levels, catalyzes the conversion of the PII proteins and UTP to PII-UMP and PPi, while under higher glutamine levels, GlnD hydrolyzes PII-UMP to PII and UMP (deuridylylation). Thus, controls uridylylation state and activity of the PII proteins, and plays an important role in the regulation of nitrogen assimilation and metabolism. The protein is Bifunctional uridylyltransferase/uridylyl-removing enzyme of Psychrobacter sp. (strain PRwf-1).